We begin with the raw amino-acid sequence, 90 residues long: uncharacterized protein (90 aa).

Residues 1 to 26 (MFKRSVSRLFCAPAPAPAPRKQPGGR) are disordered. The stretch at 33–66 (NLNQSVKKQLNHLEVLERIKKQRKEQKNNRNQVD) forms a coiled coil.

This is an uncharacterized protein from Dictyostelium discoideum (Social amoeba).